Here is a 119-residue protein sequence, read N- to C-terminus: Ribonuclease P protein component (119 aa).

The protein belongs to the RnpA family. As to quaternary structure, consists of a catalytic RNA component (M1 or rnpB) and a protein subunit.

The catalysed reaction is Endonucleolytic cleavage of RNA, removing 5'-extranucleotides from tRNA precursor.. RNaseP catalyzes the removal of the 5'-leader sequence from pre-tRNA to produce the mature 5'-terminus. It can also cleave other RNA substrates such as 4.5S RNA. The protein component plays an auxiliary but essential role in vivo by binding to the 5'-leader sequence and broadening the substrate specificity of the ribozyme. This chain is Ribonuclease P protein component, found in Escherichia coli O157:H7.